The chain runs to 1081 residues: Mediator of RNA polymerase II transcription subunit 15 (1081 aa).

Position 2 is an N-acetylserine (S2). The segment at 25–49 (LQVLMDINTLNGGSSDTADKIRIHA) is interaction with GCN4. Positions 238–286 (QAQAQANNNNNGLPQNGNINNNINIPQQQQMQPPNSSANNNPLQQQSSQ) are disordered. Position 335 is a phosphoserine (S335). Repeat copies occupy residues 422-423 (QA), 424-425 (QA), 426-427 (QA), 428-429 (QA), 430-431 (QA), 432-433 (QA), 434-435 (QA), 436-437 (QA), 438-439 (QA), 440-441 (QA), and 442-443 (QA). The 30 X 2 AA approximate tandem repeats of Q-A stretch occupies residues 422-481 (QAQAQAQAQAQAQAQAQAQAQAAQAAQAQAQAQAQAQAQAQAQAQAQAQAQAQAQAQAQA). One copy of the 12; approximate repeat lies at 444–445 (AQ). The 13; approximate repeat unit spans residues 446–447 (AA). 17 consecutive repeat copies span residues 448–449 (QA), 450–451 (QA), 452–453 (QA), 454–455 (QA), 456–457 (QA), 458–459 (QA), 460–461 (QA), 462–463 (QA), 464–465 (QA), 466–467 (QA), 468–469 (QA), 470–471 (QA), 472–473 (QA), 474–475 (QA), 476–477 (QA), 478–479 (QA), and 480–481 (QA). Low complexity predominate over residues 476-497 (QAQAQAHAQHQPSQQPQQAQQQ). Disordered regions lie at residues 476-505 (QAQAQAHAQHQPSQQPQQAQQQPNPLHGLT) and 692-712 (QQQQQHIYPSSTPGVANYSAM). Phosphoserine is present on residues S736, S752, S783, S785, and S789. Residues 744 to 836 (PVSAAATPSL…KTVQSPMGAQ (93 aa)) form a disordered region. Polar residues predominate over residues 749 to 836 (ATPSLNKTIN…KTVQSPMGAQ (88 aa)). Phosphothreonine is present on T793. 5 positions are modified to phosphoserine: S831, S1003, S1008, S1018, and S1034. A disordered region spans residues 1026-1055 (DSKKIKVDSPDDPFMTKSGATTSEKQEVTN).

It belongs to the Mediator complex subunit 15 family. In terms of assembly, component of the Mediator complex, which is composed of at least 21 subunits that form three structurally distinct submodules. The Mediator head module contains MED6, MED8, MED11, SRB4/MED17, SRB5/MED18, ROX3/MED19, SRB2/MED20 and SRB6/MED22, the middle module contains MED1, MED4, NUT1/MED5, MED7, CSE2/MED9, NUT2/MED10, SRB7/MED21 and SOH1/MED31, and the tail module contains MED2, PGD1/MED3, RGR1/MED14, GAL11/MED15 and SIN4/MED16. The head and the middle modules interact directly with RNA polymerase II, whereas the elongated tail module interacts with gene-specific regulatory proteins. GAL11/MED15 interacts with the activator GAL4; the interaction is direct. GAL11/MED15 interacts (via multiple regions) with the activator GCN4; the interaction is direct.

The protein localises to the nucleus. In terms of biological role, component of the Mediator complex, a coactivator involved in the regulated transcription of nearly all RNA polymerase II-dependent genes. Mediator functions as a bridge to convey information from gene-specific regulatory proteins to the basal RNA polymerase II transcription machinery. The Mediator complex, having a compact conformation in its free form, is recruited to promoters by direct interactions with regulatory proteins and serves for the assembly of a functional pre-initiation complex with RNA polymerase II and the general transcription factors. The Mediator complex unfolds to an extended conformation and partially surrounds RNA polymerase II, specifically interacting with the unphosphorylated form of the C-terminal domain (CTD) of RNA polymerase II. The Mediator complex dissociates from the RNA polymerase II holoenzyme and stays at the promoter when transcriptional elongation begins. It has an important role in the negative regulation of Ty transcription. The protein is Mediator of RNA polymerase II transcription subunit 15 of Saccharomyces cerevisiae (strain ATCC 204508 / S288c) (Baker's yeast).